A 492-amino-acid chain; its full sequence is FAD-linked oxidoreductase pgmH (492 aa).

Positions 54-224 constitute an FAD-binding PCMH-type domain; the sequence is SIRLATLVVY…TEFKYRVHKQ (171 aa).

This sequence belongs to the oxygen-dependent FAD-linked oxidoreductase family. It depends on FAD as a cofactor.

It functions in the pathway pigment biosynthesis. It participates in secondary metabolite biosynthesis. Its function is as follows. FAD-linked oxidoreductase; part of the gene cluster that mediates the biosynthesis of pleosporalin A, ascomycone A, as well as a third cryptic naphthoquinone derived pigment, all responsible for the coloration of conidia. Essential for the production of pleosporalin A, but not the 2 other final products. The pathway begins with the biosynthesis of the cyclized heptaketide 3-acetonyl-1,6,8-trihydroxy-2-naphthaldehyde by the NR-PKS pgmA. The C-6 hydroxyl group is further methylated by the O-methyltransferase pgmB to yield fusarubinaldehyde which is in turn oxidized by the cytochrome P450 monooxygenase pgmC at C-9. The C-1 hydroxyl group is then methylated spontaneously. Although pgmE, pgmD and pgmH are essential for the production of pleosporalin A, it is not the case for the 2 other final products and it remains difficult to assign a specific function to each enzyme. PgmF and pgmG seem not to be involved in pigment biosynthesis although they were regulated by the cluster-specific transcription factor pgmR. The sequence is that of FAD-linked oxidoreductase pgmH from Aspergillus terreus.